Reading from the N-terminus, the 644-residue chain is 1,4-alpha-glucan branching enzyme GlgB (644 aa).

The active-site Nucleophile is aspartate 309. The active-site Proton donor is the glutamate 362.

This sequence belongs to the glycosyl hydrolase 13 family. GlgB subfamily. Monomer.

It carries out the reaction Transfers a segment of a (1-&gt;4)-alpha-D-glucan chain to a primary hydroxy group in a similar glucan chain.. It functions in the pathway glycan biosynthesis; glycogen biosynthesis. In terms of biological role, catalyzes the formation of the alpha-1,6-glucosidic linkages in glycogen by scission of a 1,4-alpha-linked oligosaccharide from growing alpha-1,4-glucan chains and the subsequent attachment of the oligosaccharide to the alpha-1,6 position. The sequence is that of 1,4-alpha-glucan branching enzyme GlgB from Cutibacterium acnes (strain DSM 16379 / KPA171202) (Propionibacterium acnes).